A 577-amino-acid polypeptide reads, in one-letter code: Arginine--tRNA ligase (577 aa).

The 'HIGH' region motif lies at Pro-122 to His-132.

Belongs to the class-I aminoacyl-tRNA synthetase family. Monomer.

The protein localises to the cytoplasm. The enzyme catalyses tRNA(Arg) + L-arginine + ATP = L-arginyl-tRNA(Arg) + AMP + diphosphate. This is Arginine--tRNA ligase from Escherichia coli O1:K1 / APEC.